A 169-amino-acid polypeptide reads, in one-letter code: U3 small nucleolar ribonucleoprotein protein imp3 (169 aa).

Residues 109–166 (RRLPVVMCRLKMCETVSTSVKYVEHGHVRVGPEVITDPAFFVTRNMEDFVTWVDSSKI) enclose the S4 RNA-binding domain.

The protein belongs to the universal ribosomal protein uS4 family. As to quaternary structure, component of a heterotrimeric complex containing imp3, imp4 and mpp10.

The protein resides in the nucleus. It localises to the nucleolus. Its function is as follows. Component of the U3 small nucleolar ribonucleoprotein. Required for the early cleavages at sites A0, A1 and A2 during 18S ribosomal pre-RNA processing. The protein is U3 small nucleolar ribonucleoprotein protein imp3 (RBP) of Pneumocystis carinii.